The sequence spans 1758 residues: RanBP2-like and GRIP domain-containing protein 4 (1758 aa).

Ser21 carries the phosphoserine modification. TPR repeat units lie at residues 60-93 (PRAH…NPTQ) and 584-617 (QKMG…LKII). The segment at 761 to 805 (DPLYKNGSLRNADSEIKHSTPSPTKYSLSPSKSYKYSPKTPPRWA) is disordered. A compositionally biased stretch (low complexity) spans 779 to 798 (STPSPTKYSLSPSKSYKYSP). Residues 1037 to 1173 (HFEPVVQMPE…FEECQQLLLD (137 aa)) form the RanBD1 1 domain. 2 disordered regions span residues 1213–1249 (QTKV…TLEW) and 1295–1332 (SFKS…ERDG). Positions 1236–1245 (IKPNPENTGP) are enriched in polar residues. Low complexity predominate over residues 1295 to 1309 (SFKSALSPSKSPAKL). Residues 1318–1330 (TDEESDVTQEEER) are compositionally biased toward acidic residues. The RanBD1 2 domain occupies 1334–1470 (YFEPVVPLPD…FDEAKTAQEK (137 aa)). Residues 1583 to 1594 (SETSSVAQSGSE) show a composition bias toward polar residues. The interval 1583 to 1621 (SETSSVAQSGSESKVEPKKCELSKNSDIEQSSDSKVKNL) is disordered. Positions 1595 to 1618 (SKVEPKKCELSKNSDIEQSSDSKV) are enriched in basic and acidic residues. Residues 1703–1753 (QEESAANVEHLKNVLLQFIFLKPGSERERLLPVINTMLQLSPEEKGKLAAV) form the GRIP domain.

The polypeptide is RanBP2-like and GRIP domain-containing protein 4 (RGPD4) (Homo sapiens (Human)).